A 138-amino-acid polypeptide reads, in one-letter code: Mitochondrial import inner membrane translocase subunit tim-16 (138 aa).

Low complexity predominate over residues 32 to 43 (TQQAAARHAAAT). Disordered regions lie at residues 32 to 58 (TQQAAARHAAATGQSPSETKENANANA) and 118 to 138 (LSRLEQKSEENKEQQKENSKE). The span at 44 to 56 (GQSPSETKENANA) shows a compositional bias: polar residues. Residues 66-119 (ESLQILNVKTPLNREDVEKHYEHLFAINDKAKGGTFYLQSKVYRAKERIDEELS) are J-like.

The protein belongs to the TIM16/PAM16 family. Probable component of the PAM complex at least composed of a mitochondrial HSP70 protein, GrpE, tim-44, tim-16 and tim-14. Associates with the TIM23 complex.

The protein localises to the mitochondrion inner membrane. Functionally, regulates ATP-dependent protein translocation into the mitochondrial matrix. The chain is Mitochondrial import inner membrane translocase subunit tim-16 from Caenorhabditis briggsae.